The chain runs to 361 residues: Aromatic amino acid aminotransferase (361 aa).

The residue at position 221 (lysine 221) is an N6-(pyridoxal phosphate)lysine.

Belongs to the class-II pyridoxal-phosphate-dependent aminotransferase family. In terms of assembly, homodimer. Pyridoxal 5'-phosphate is required as a cofactor.

It catalyses the reaction an aromatic L-alpha-amino acid + 2-oxoglutarate = an aromatic oxo-acid + L-glutamate. Functionally, aminotransferase that catalyzes the conversion of aromatic amino acids and 2-oxoglutarate into corresponding aromatic oxo acids and L-glutamate. The sequence is that of Aromatic amino acid aminotransferase from Mycobacterium ulcerans (strain Agy99).